A 24-amino-acid polypeptide reads, in one-letter code: Brevinin-1SY (24 aa).

An intrachain disulfide couples Cys18 to Cys24.

As to expression, expressed by the skin glands.

The protein localises to the secreted. Functionally, antibacterial activity against Gram-positive bacterium S.aureus and Gram-negative bacterium E.coli. The polypeptide is Brevinin-1SY (Lithobates sylvaticus (Wood frog)).